Consider the following 203-residue polypeptide: Large ribosomal subunit protein uL22 (203 aa).

Positions 138–167 are enriched in polar residues; it reads PENTQSGALSQQSQAEQPQNDPENGVDSQL. Positions 138 to 203 are disordered; that stretch reads PENTQSGALS…TVLAQEKEVK (66 aa). Residues 168-177 show a composition bias toward low complexity; it reads SAKTNSTTTA. Over residues 183-196 the composition is skewed to polar residues; the sequence is ADNSTKNDATNTVL.

It belongs to the universal ribosomal protein uL22 family. Part of the 50S ribosomal subunit.

This protein binds specifically to 23S rRNA; its binding is stimulated by other ribosomal proteins, e.g. L4, L17, and L20. It is important during the early stages of 50S assembly. It makes multiple contacts with different domains of the 23S rRNA in the assembled 50S subunit and ribosome. Its function is as follows. The globular domain of the protein is located near the polypeptide exit tunnel on the outside of the subunit, while an extended beta-hairpin is found that lines the wall of the exit tunnel in the center of the 70S ribosome. The chain is Large ribosomal subunit protein uL22 from Mesomycoplasma hyopneumoniae (strain 7448) (Mycoplasma hyopneumoniae).